We begin with the raw amino-acid sequence, 259 residues long: Protein N-terminal and lysine N-methyltransferase efm7 (259 aa).

S-adenosyl-L-methionine-binding positions include W56, 83–85 (GAA), D105, W139, and A163.

This sequence belongs to the class I-like SAM-binding methyltransferase superfamily. EFM7 family.

The protein localises to the cytoplasm. Functionally, S-adenosyl-L-methionine-dependent protein methyltransferase that trimethylates the N-terminal glycine 'Gly-2' of elongation factor 1-alpha, before also catalyzing the mono- and dimethylation of 'Lys-3'. The polypeptide is Protein N-terminal and lysine N-methyltransferase efm7 (Aspergillus fumigatus (strain ATCC MYA-4609 / CBS 101355 / FGSC A1100 / Af293) (Neosartorya fumigata)).